A 21-amino-acid chain; its full sequence is Major outer membrane protein P44 (21 aa).

In terms of assembly, monomer.

The protein resides in the cell outer membrane. This chain is Major outer membrane protein P44, found in Mannheimia haemolytica (Pasteurella haemolytica).